A 505-amino-acid chain; its full sequence is Lysine--tRNA ligase (505 aa).

Mg(2+) is bound by residues Glu415 and Glu422.

Belongs to the class-II aminoacyl-tRNA synthetase family. In terms of assembly, homodimer. Mg(2+) is required as a cofactor.

It is found in the cytoplasm. The catalysed reaction is tRNA(Lys) + L-lysine + ATP = L-lysyl-tRNA(Lys) + AMP + diphosphate. This is Lysine--tRNA ligase from Citrobacter koseri (strain ATCC BAA-895 / CDC 4225-83 / SGSC4696).